Consider the following 63-residue polypeptide: uncharacterized protein (63 aa).

Residues 1 to 17 (MRYTDSRKLTPETDANH) are compositionally biased toward basic and acidic residues. A disordered region spans residues 1–32 (MRYTDSRKLTPETDANHKTASPQPIRRISSQT). Residues 18-32 (KTASPQPIRRISSQT) are compositionally biased toward polar residues.

To Y.enterocolitica HemP.

This is an uncharacterized protein from Escherichia coli (strain K12).